A 125-amino-acid chain; its full sequence is Small ribosomal subunit protein eS8 (125 aa).

The protein belongs to the eukaryotic ribosomal protein eS8 family. As to quaternary structure, part of the 30S ribosomal subunit.

This is Small ribosomal subunit protein eS8 from Methanocella arvoryzae (strain DSM 22066 / NBRC 105507 / MRE50).